The following is a 101-amino-acid chain: Chaperone modulatory protein CbpM (101 aa).

This sequence belongs to the CbpM family.

In terms of biological role, interacts with CbpA and inhibits both the DnaJ-like co-chaperone activity and the DNA binding activity of CbpA. Together with CbpA, modulates the activity of the DnaK chaperone system. Does not inhibit the co-chaperone activity of DnaJ. The sequence is that of Chaperone modulatory protein CbpM from Salmonella paratyphi A (strain ATCC 9150 / SARB42).